The chain runs to 559 residues: MAAQGFLLIASFLLILLVLAKPLGSGLARLIAAVPLPGVAGVERILWRTLGITDHEMNWRQYLLALLTLNLLGLGILFCLLFWQEWLPLNPQRLPGLSWDLALNTAVSFVTNTNWQAYSGESTLSYFSQMAGLTVQNFLSAATGIAVVFALIRAFTRQNVHTLGNAWQDLVRITLWILFPVALIIALFFIQQGVPQNLSAYQPITTLEGAKQLLPMGPVASQEAIKMLGTNGGGFFNANSSHPFENPTALTNLAQMLAIFLIPAALCFAFGEAAGDRRQGRALLWAMSFIFVVCVAVVMWAEVQGNPHLLAAGADSSVNMEGKEARFGVLASSLFAVVTTAASCGAVNAMHDSFTALGGMVPMWLMQIGEVVFGGVGSGLYGMLLFVLLAVFIAGLMIGRTPEYLGKKIDVREMKMTALAILVTPMLVLLGSALAMMTDAGRSAMLNPGPHGFSEVLYAVSSAANNNGSAFAGLSANSPFWNCLLAFCMFVGRFGVIIPVMAIAGSLVSKKVQPASQGTLATHGALFIGLLIGTVLLVGALTFIPALALGPVAEHFSLP.

The next 13 helical transmembrane spans lie at 5–25 (GFLL…PLGS), 27–47 (LARL…RILW), 63–83 (LLAL…LLFW), 132–152 (GLTV…FALI), 170–190 (LVRI…LFFI), 253–273 (LAQM…FGEA), 283–303 (LLWA…WAEV), 327–347 (FGVL…CGAV), 356–376 (ALGG…FGGV), 379–399 (GLYG…LMIG), 416–436 (MTAL…ALAM), 484–504 (LLAF…MAIA), and 524–544 (GALF…LTFI).

Belongs to the KdpA family. The system is composed of three essential subunits: KdpA, KdpB and KdpC.

Its subcellular location is the cell inner membrane. Part of the high-affinity ATP-driven potassium transport (or Kdp) system, which catalyzes the hydrolysis of ATP coupled with the electrogenic transport of potassium into the cytoplasm. This subunit binds the periplasmic potassium ions and delivers the ions to the membrane domain of KdpB through an intramembrane tunnel. This is Potassium-transporting ATPase potassium-binding subunit from Salmonella typhi.